Reading from the N-terminus, the 143-residue chain is Large ribosomal subunit protein uL15 (143 aa).

A disordered region spans residues 1–59 (MELNGIKPADGAKHYKRRVGRGIGSGIGKTAGRGHKGQKSRAGGYHKVGFEGGQMPMQR). A compositionally biased stretch (gly residues) spans 21–31 (RGIGSGIGKTA).

This sequence belongs to the universal ribosomal protein uL15 family. Part of the 50S ribosomal subunit.

Binds to the 23S rRNA. The chain is Large ribosomal subunit protein uL15 from Albidiferax ferrireducens (strain ATCC BAA-621 / DSM 15236 / T118) (Rhodoferax ferrireducens).